The following is a 272-amino-acid chain: Indole-3-glycerol phosphate synthase (272 aa).

Belongs to the TrpC family.

The catalysed reaction is 1-(2-carboxyphenylamino)-1-deoxy-D-ribulose 5-phosphate + H(+) = (1S,2R)-1-C-(indol-3-yl)glycerol 3-phosphate + CO2 + H2O. It participates in amino-acid biosynthesis; L-tryptophan biosynthesis; L-tryptophan from chorismate: step 4/5. This is Indole-3-glycerol phosphate synthase from Mycobacterium tuberculosis (strain ATCC 25177 / H37Ra).